A 167-amino-acid chain; its full sequence is Endoribonuclease YbeY (167 aa).

Residues His126, His130, and His136 each coordinate Zn(2+).

It belongs to the endoribonuclease YbeY family. It depends on Zn(2+) as a cofactor.

The protein localises to the cytoplasm. Its function is as follows. Single strand-specific metallo-endoribonuclease involved in late-stage 70S ribosome quality control and in maturation of the 3' terminus of the 16S rRNA. The protein is Endoribonuclease YbeY of Novosphingobium aromaticivorans (strain ATCC 700278 / DSM 12444 / CCUG 56034 / CIP 105152 / NBRC 16084 / F199).